We begin with the raw amino-acid sequence, 414 residues long: 2,3-diketo-5-methylthiopentyl-1-phosphate enolase (414 aa).

K99 serves as the catalytic Proton acceptor. Residues K148, 174-177 (KDDE), H265, G338, and 360-361 (GG) contribute to the substrate site. Residues K174, D176, and E177 each coordinate Mg(2+). K174 carries the N6-carboxylysine modification.

This sequence belongs to the RuBisCO large chain family. Type IV subfamily. Homodimer. Requires Mg(2+) as cofactor.

The catalysed reaction is 5-methylsulfanyl-2,3-dioxopentyl phosphate = 2-hydroxy-5-methylsulfanyl-3-oxopent-1-enyl phosphate. The protein operates within amino-acid biosynthesis; L-methionine biosynthesis via salvage pathway; L-methionine from S-methyl-5-thio-alpha-D-ribose 1-phosphate: step 3/6. Functionally, catalyzes the enolization of 2,3-diketo-5-methylthiopentyl-1-phosphate (DK-MTP-1-P) into 2-hydroxy-3-keto-5-methylthiopentenyl-1-phosphate (HK-MTPenyl-1-P). This is 2,3-diketo-5-methylthiopentyl-1-phosphate enolase from Bacillus cereus (strain AH187).